A 208-amino-acid chain; its full sequence is FMN-dependent NADH:quinone oxidoreductase 1 (208 aa).

This sequence belongs to the azoreductase type 1 family. In terms of assembly, homodimer. FMN is required as a cofactor.

It carries out the reaction 2 a quinone + NADH + H(+) = 2 a 1,4-benzosemiquinone + NAD(+). The enzyme catalyses N,N-dimethyl-1,4-phenylenediamine + anthranilate + 2 NAD(+) = 2-(4-dimethylaminophenyl)diazenylbenzoate + 2 NADH + 2 H(+). Quinone reductase that provides resistance to thiol-specific stress caused by electrophilic quinones. Its function is as follows. Also exhibits azoreductase activity. Catalyzes the reductive cleavage of the azo bond in aromatic azo compounds to the corresponding amines. The polypeptide is FMN-dependent NADH:quinone oxidoreductase 1 (Bacillus licheniformis (strain ATCC 14580 / DSM 13 / JCM 2505 / CCUG 7422 / NBRC 12200 / NCIMB 9375 / NCTC 10341 / NRRL NRS-1264 / Gibson 46)).